A 218-amino-acid chain; its full sequence is MVIYNILMDLRIVKNENCTDDLDYQSHTNNVHNEFLKNIMCQDCFKTKNNCLCKNIHECKTIKPRKICEYCNEIYIKKKIIKGKNSIQIKWQCPKSHQSGSHCKKCMSQLINGECRNYDCNCGKDGSCCQICGLMYKYGKCINGHDDSNKCDYCGMIYVDGVYLCGHNGDICEECVLLKEHGFCPLVDEHNKCSGEISTNYFNDNYDEMDITIHDYLI.

This is an uncharacterized protein from Acanthamoeba polyphaga (Amoeba).